Consider the following 353-residue polypeptide: Holliday junction branch migration complex subunit RuvB (353 aa).

Residues 4 to 185 (ADRLITAAGG…FGIVQRLEFY (182 aa)) are large ATPase domain (RuvB-L). Residues I24, R25, G66, K69, T70, T71, 132–134 (EDF), R175, Y185, and R222 each bind ATP. T70 contacts Mg(2+). Residues 186–256 (NIADLSTIVS…TADKALNLLD (71 aa)) form a small ATPAse domain (RuvB-S) region. The interval 259–353 (EHGFDHQDRR…DDVVDDPADL (95 aa)) is head domain (RuvB-H). DNA is bound by residues R295, R314, and R319.

This sequence belongs to the RuvB family. Homohexamer. Forms an RuvA(8)-RuvB(12)-Holliday junction (HJ) complex. HJ DNA is sandwiched between 2 RuvA tetramers; dsDNA enters through RuvA and exits via RuvB. An RuvB hexamer assembles on each DNA strand where it exits the tetramer. Each RuvB hexamer is contacted by two RuvA subunits (via domain III) on 2 adjacent RuvB subunits; this complex drives branch migration. In the full resolvosome a probable DNA-RuvA(4)-RuvB(12)-RuvC(2) complex forms which resolves the HJ.

The protein resides in the cytoplasm. The enzyme catalyses ATP + H2O = ADP + phosphate + H(+). Its function is as follows. The RuvA-RuvB-RuvC complex processes Holliday junction (HJ) DNA during genetic recombination and DNA repair, while the RuvA-RuvB complex plays an important role in the rescue of blocked DNA replication forks via replication fork reversal (RFR). RuvA specifically binds to HJ cruciform DNA, conferring on it an open structure. The RuvB hexamer acts as an ATP-dependent pump, pulling dsDNA into and through the RuvAB complex. RuvB forms 2 homohexamers on either side of HJ DNA bound by 1 or 2 RuvA tetramers; 4 subunits per hexamer contact DNA at a time. Coordinated motions by a converter formed by DNA-disengaged RuvB subunits stimulates ATP hydrolysis and nucleotide exchange. Immobilization of the converter enables RuvB to convert the ATP-contained energy into a lever motion, pulling 2 nucleotides of DNA out of the RuvA tetramer per ATP hydrolyzed, thus driving DNA branch migration. The RuvB motors rotate together with the DNA substrate, which together with the progressing nucleotide cycle form the mechanistic basis for DNA recombination by continuous HJ branch migration. Branch migration allows RuvC to scan DNA until it finds its consensus sequence, where it cleaves and resolves cruciform DNA. The polypeptide is Holliday junction branch migration complex subunit RuvB (Pseudomonas savastanoi pv. phaseolicola (strain 1448A / Race 6) (Pseudomonas syringae pv. phaseolicola (strain 1448A / Race 6))).